A 114-amino-acid chain; its full sequence is Nucleoid-associated protein PCC7424_2224 (114 aa).

Belongs to the YbaB/EbfC family. As to quaternary structure, homodimer.

It localises to the cytoplasm. Its subcellular location is the nucleoid. In terms of biological role, binds to DNA and alters its conformation. May be involved in regulation of gene expression, nucleoid organization and DNA protection. The protein is Nucleoid-associated protein PCC7424_2224 of Gloeothece citriformis (strain PCC 7424) (Cyanothece sp. (strain PCC 7424)).